The following is a 160-amino-acid chain: Cathelin-related peptide SC5 (160 aa).

The N-terminal stretch at 1-29 (METQRASLSLGRCSLWLLLLGLALPSASA) is a signal peptide. Residues 30-131 (QVLSYREAVL…DITCAEPQSV (102 aa)) constitute a propeptide that is removed on maturation. 2 disulfides stabilise this stretch: C86–C97 and C108–C125.

The protein belongs to the cathelicidin family.

It is found in the secreted. Broad spectrum bactericidal agent. The polypeptide is Cathelin-related peptide SC5 (Ovis aries (Sheep)).